The chain runs to 362 residues: Large ribosomal subunit protein uL4A (362 aa).

Ser2 carries the post-translational modification N-acetylserine. Arg95 is subject to Omega-N-methylarginine. The interval 277 to 362 (PSHIISTSDV…AVFTETLKHD (86 aa)) is C-terminal-extended nuclear localization signal.

Belongs to the universal ribosomal protein uL4 family. As to quaternary structure, component of the large ribosomal subunit (LSU). Mature yeast ribosomes consist of a small (40S) and a large (60S) subunit. The 40S small subunit contains 1 molecule of ribosomal RNA (18S rRNA) and 33 different proteins (encoded by 57 genes). The large 60S subunit contains 3 rRNA molecules (25S, 5.8S and 5S rRNA) and 46 different proteins (encoded by 81 genes). uL4 is associated with the polypeptide exit tunnel. uL4 interacts with its chaperone ACL4 and the nuclear import receptor KAP104. Post-translationally, N-terminally acetylated by acetyltransferase NatA.

The protein resides in the cytoplasm. The protein localises to the nucleus. In terms of biological role, component of the ribosome, a large ribonucleoprotein complex responsible for the synthesis of proteins in the cell. The small ribosomal subunit (SSU) binds messenger RNAs (mRNAs) and translates the encoded message by selecting cognate aminoacyl-transfer RNA (tRNA) molecules. The large subunit (LSU) contains the ribosomal catalytic site termed the peptidyl transferase center (PTC), which catalyzes the formation of peptide bonds, thereby polymerizing the amino acids delivered by tRNAs into a polypeptide chain. The nascent polypeptides leave the ribosome through a tunnel in the LSU and interact with protein factors that function in enzymatic processing, targeting, and the membrane insertion of nascent chains at the exit of the ribosomal tunnel. uL4 participates in the regulation of the accumulation of its own mRNA. The sequence is that of Large ribosomal subunit protein uL4A from Saccharomyces cerevisiae (strain ATCC 204508 / S288c) (Baker's yeast).